A 757-amino-acid chain; its full sequence is MAMARRSASRLLSSFRPFSLLLQPLDDAPSLSAAAAAASARRGMSSASALRARDEKEVARWRESMDRMRNIGISAHIDSGKTTLTERVLYYTGRIHEIHEVRGRDGVGAKMDSMDLEREKGITIQSAATYCTWNGYQVNIIDTPGHVDFTIEVERALRVLDGAILVLCSVGGVQSQSITVDRQMRRYEIPRVAFINKLDRMGADPWKVLNQARSKLRHHNAAVQVPIGLEEEFEGLVDLVELKAYKFEGGSGQNVVASDVPSNMQDLVMEKRRELIEVVSEVDDQLAEAFLNDEPIQANQLKAAIRRATVARKFIPVYMGSAFKNKGVQPLLDGVLDYLPCPMEVESYALDQNKSEEKVLLAGTPAEPLVALAFKLEEGRFGQLTYLRIYDGVIRKGDFIYNVNTGKKIKVPRLVRMHSNEMEDIQEAHAGQIVAVFGVDCASGDTFTDGSVKYTMTSMNVPEPVMSLAVSPISKDSGGQFSKALNRFQKEDPTFRVGLDPESGETIISGMGELHLDIYVERIRREYKVDAKVGKPRVNFRETITQRAEFDYLHKKQSGGQGQYGRVCGYIEPLPSESDGKFEFDNMIIGQAIPSNFIPAIEKGFKEACNSGSLIGHPVENIRIVLTDGASHAVDSSELAFKLASIYAFRQCYAAARPVILEPVMKVELKVPTEFQGTVTGDMNKRKGIIVGNDQEGDDTVVVCHVPLNNMFGYSTALRSMTQGKGEFSMEYLEHNTVSQDVQMQLVNTYKASRGTE.

Residues 66–344 (DRMRNIGISA…VLDYLPCPME (279 aa)) enclose the tr-type G domain. GTP is bound by residues 75–82 (AHIDSGKT), 142–146 (DTPGH), and 196–199 (NKLD).

It belongs to the TRAFAC class translation factor GTPase superfamily. Classic translation factor GTPase family. EF-G/EF-2 subfamily.

The protein resides in the mitochondrion. The protein operates within protein biosynthesis; polypeptide chain elongation. Functionally, mitochondrial GTPase that catalyzes the GTP-dependent ribosomal translocation step during translation elongation. During this step, the ribosome changes from the pre-translocational (PRE) to the post-translocational (POST) state as the newly formed A-site-bound peptidyl-tRNA and P-site-bound deacylated tRNA move to the P and E sites, respectively. Catalyzes the coordinated movement of the two tRNA molecules, the mRNA and conformational changes in the ribosome. This is Elongation factor G, mitochondrial from Oryza sativa subsp. japonica (Rice).